A 404-amino-acid polypeptide reads, in one-letter code: Protein L-Myc-1b (404 aa).

Disordered regions lie at residues 175 to 195 and 238 to 331; these read KKQV…EEID and QQHN…FLER. Over residues 287-315 the composition is skewed to polar residues; that stretch reads VPAQSPTVSASPTHTSYHLKSQPSSPQSS. One can recognise a bHLH domain in the interval 321–373; sequence DKRKTHNFLERKRRNDLRSRFLALRDEIPGLVDCPKTPKVVILTKATEYLRTL. Residues 373–401 form a leucine-zipper region; it reads LHVSDRQKAQEKKQLKSKQQQLLRRLAEL.

In terms of assembly, efficient DNA binding requires dimerization with another bHLH protein. Binds DNA as a heterodimer with max.

Its subcellular location is the nucleus. This chain is Protein L-Myc-1b, found in Danio rerio (Zebrafish).